Consider the following 910-residue polypeptide: Leucine--tRNA ligase (910 aa).

Positions 42–52 (PYPSGKLHMGH) match the 'HIGH' region motif. Residues 658–662 (TMSKS) carry the 'KMSKS' region motif. ATP is bound at residue Lys-661.

The protein belongs to the class-I aminoacyl-tRNA synthetase family.

Its subcellular location is the cytoplasm. The enzyme catalyses tRNA(Leu) + L-leucine + ATP = L-leucyl-tRNA(Leu) + AMP + diphosphate. The chain is Leucine--tRNA ligase from Acidovorax ebreus (strain TPSY) (Diaphorobacter sp. (strain TPSY)).